The following is a 101-amino-acid chain: Small ribosomal subunit protein uS14 (101 aa).

This sequence belongs to the universal ribosomal protein uS14 family. In terms of assembly, part of the 30S ribosomal subunit. Contacts proteins S3 and S10.

Binds 16S rRNA, required for the assembly of 30S particles and may also be responsible for determining the conformation of the 16S rRNA at the A site. The sequence is that of Small ribosomal subunit protein uS14 from Burkholderia vietnamiensis (strain G4 / LMG 22486) (Burkholderia cepacia (strain R1808)).